The primary structure comprises 208 residues: Small ribosomal subunit protein uS4 (208 aa).

The tract at residues 24-52 (GVKPFDVKTKKANKAPGQHGQARGGKQSE) is disordered. Positions 98 to 160 (SRLDNVVYRM…AKQQLRIKNA (63 aa)) constitute an S4 RNA-binding domain.

Belongs to the universal ribosomal protein uS4 family. As to quaternary structure, part of the 30S ribosomal subunit. Contacts protein S5. The interaction surface between S4 and S5 is involved in control of translational fidelity.

Its function is as follows. One of the primary rRNA binding proteins, it binds directly to 16S rRNA where it nucleates assembly of the body of the 30S subunit. Functionally, with S5 and S12 plays an important role in translational accuracy. This is Small ribosomal subunit protein uS4 from Acinetobacter baumannii (strain ATCC 17978 / DSM 105126 / CIP 53.77 / LMG 1025 / NCDC KC755 / 5377).